The chain runs to 615 residues: MRLSFGKQRYHGGTTVTLTEQGASDSLRAAQAIFQNHSNEVSSPCPPVTVSRNPQTRLSEPSLQKSGRKQEQKKARIRTKQVPKIKTTAPNDVELSKKHRSSPAGKDNVSSTAQMAAALAHSQSKLSSDNNSSHSSALDTLKVLETPNLNGLLGIHSRSSSRNGSNESLTPGQRTPDNRSQENLLTSFSSGRRLSSSSMEPATNKDSNKALPKRRPSPPLQSSLVGSGQLHENENLSSISIDSRHSLNPDTSDVISNRSQTSLSQTINQLSLCESEPSIASSNTTTTTSNQGSGLPNLVPNYSSDMRKKKLVNKFKRKVFGSKPKHLSSQYEMDASSEELGQHEQQPSMRFKTTLRKTSVSTNAENDHASSLHEGNLRYKYNPSNDTYDVYDDTDSDSESDQNQDALTKPRKRDRIKRKIRNSANKTAHHRPIHRTRDRKFNEDKPWKSHTDITFVTDNERKRYESMWVSNRHRHLNLLSWWPSITGDSGAINTLPEDGLILGIIVRDIWKRSNLPNSLLAEIYTKVDTRKDGTLDRKSFIVGMWLVDQCLYGRKLPNVVEQCVWDSVDRYASTTVVPVSTLKAMAKQKRKQMKEEIKNIKKENRVVLVDHNSSS.

Disordered regions lie at residues 38–135 (SNEV…SSHS), 152–260 (LLGI…NRSQ), 277–304 (PSIA…NYSS), and 323–445 (KPKH…NEDK). The segment covering 50–65 (VSRNPQTRLSEPSLQK) has biased composition (polar residues). 2 stretches are compositionally biased toward low complexity: residues 121-135 (HSQS…SSHS) and 157-168 (SRSSSRNGSNES). Ser180 carries the post-translational modification Phosphoserine. Over residues 184-198 (LLTSFSSGRRLSSSS) the composition is skewed to low complexity. Residues 248–260 (NPDTSDVISNRSQ) are compositionally biased toward polar residues. Residues 281 to 290 (SSNTTTTTSN) are compositionally biased toward low complexity. A compositionally biased stretch (basic and acidic residues) spans 365–377 (ENDHASSLHEGNL). Over residues 389–402 (DVYDDTDSDSESDQ) the composition is skewed to acidic residues. The segment covering 409–438 (KPRKRDRIKRKIRNSANKTAHHRPIHRTRD) has biased composition (basic residues). An EH domain is found at 460–571 (ERKRYESMWV…QCVWDSVDRY (112 aa)).

This sequence belongs to the IRS4 family. As to quaternary structure, interacts with INP51.

Its function is as follows. With TAX4, acts as a positive regulator of INP51 activity and phosphatidylinositol 4,5-bisphosphate turnover. Negatively regulates signaling through the cell integrity pathway, including the MAP kinase SLT2. Also seems to be involved in rDNA silencing. The chain is Increased rDNA silencing protein 4 (IRS4) from Saccharomyces cerevisiae (strain ATCC 204508 / S288c) (Baker's yeast).